Here is a 469-residue protein sequence, read N- to C-terminus: Pentatricopeptide repeat-containing protein At2g34370, mitochondrial (469 aa).

A mitochondrion-targeting transit peptide spans methionine 1–arginine 65. PPR repeat units follow at residues aspartate 142–arginine 172, asparagine 173–proline 207, aspartate 208–aspartate 238, and serine 244–glutamate 274. The interval aspartate 375–tryptophan 469 is type DYW motif.

It belongs to the PPR family. PCMP-H subfamily.

It is found in the mitochondrion. The protein is Pentatricopeptide repeat-containing protein At2g34370, mitochondrial (PCMP-H25) of Arabidopsis thaliana (Mouse-ear cress).